Here is a 1070-residue protein sequence, read N- to C-terminus: MGAARGSPARPRRLPLLSVLLLPLLGGTQTAIVFIKQPSSQDALQGRRALLRCEVEAPGPVHVYWLLDGAPVQDTERRFAQGSSLSFAAVDRLQDSGTFQCVARDDVTGEEARSANASFNIKWIEAGPVVLKHPASEAEIQPQTQVTLRCHIDGHPRPTYQWFRDGTPLSDGQSNHTVSSKERNLTLRPAGPEHSGLYSCCAHSAFGQACSSQNFTLSIADESFARVVLAPQDVVVARYEEAMFHCQFSAQPPPSLQWLFEDETPITNRSRPPHLRRATVFANGSLLLTQVRPRNAGIYRCIGQGQRGPPIILEATLHLAEIEDMPLFEPRVFTAGSEERVTCLPPKGLPEPSVWWEHAGVRLPTHGRVYQKGHELVLANIAESDAGVYTCHAANLAGQRRQDVNITVATVPSWLKKPQDSQLEEGKPGYLDCLTQATPKPTVVWYRNQMLISEDSRFEVFKNGTLRINSVEVYDGTWYRCMSSTPAGSIEAQARVQVLEKLKFTPPPQPQQCMEFDKEATVPCSATGREKPTIKWERADGSSLPEWVTDNAGTLHFARVTRDDAGNYTCIASNGPQGQIRAHVQLTVAVFITFKVEPERTTVYQGHTALLQCEAQGDPKPLIQWKGKDRILDPTKLGPRMHIFQNGSLVIHDVAPEDSGRYTCIAGNSCNIKHTEAPLYVVDKPVPEESEGPGSPPPYKMIQTIGLSVGAAVAYIIAVLGLMFYCKKRCKAKRLQKQPEGEEPEMECLNGGPLQNGQPSAEIQEEVALTSLGSGPAATNKRHSTSDKMHFPRSSLQPITTLGKSEFGEVFLAKAQGLEEGVAETLVLVKSLQSKDEQQQLDFRRELEMFGKLNHANVVRLLGLCREAEPHYMVLEYVDLGDLKQFLRISKSKDEKLKSQPLSTKQKVALCTQVALGMEHLSNNRFVHKDLAARNCLVSAQRQVKVSALGLSKDVYNSEYYHFRQAWVPLRWMSPEAILEGDFSTKSDVWAFGVLMWEVFTHGEMPHGGQADDEVLADLQAGKARLPQPEGCPSKLYRLMQRCWALSPKDRPSFSEIASALGDSTVDSKP.

A signal peptide spans 1–30 (MGAARGSPARPRRLPLLSVLLLPLLGGTQT). Ig-like C2-type domains lie at 31-120 (AIVF…ASFN), 128-218 (PVVL…FTLS), 225-317 (ARVV…EATL), 309-407 (PPII…VNIT), 412-497 (PSWL…ARVQ), 503-586 (KFTP…HVQL), and 578-680 (GQIR…APLY). The Extracellular segment spans residues 31 to 704 (AIVFIKQPSS…SPPPYKMIQT (674 aa)). A disulfide bond links Cys53 and Cys101. 6 N-linked (GlcNAc...) asparagine glycosylation sites follow: Asn116, Asn175, Asn184, Asn214, Asn268, and Asn283. Cys150 and Cys200 are oxidised to a cystine. 2 disulfide bridges follow: Cys246–Cys301 and Cys343–Cys391. Asn405, Asn463, Asn567, and Asn646 each carry an N-linked (GlcNAc...) asparagine glycan. Intrachain disulfides connect Cys433–Cys481, Cys524–Cys570, and Cys613–Cys664. A helical membrane pass occupies residues 705-725 (IGLSVGAAVAYIIAVLGLMFY). The Cytoplasmic portion of the chain corresponds to 726–1070 (CKKRCKAKRL…LGDSTVDSKP (345 aa)). Disordered regions lie at residues 736–759 (QKQP…NGQP) and 773–793 (GSGP…HFPR). Residues 794-1070 (SSLQPITTLG…LGDSTVDSKP (277 aa)) form an interaction with CTNNB1 region. A Protein kinase; inactive domain is found at 796–1066 (LQPITTLGKS…IASALGDSTV (271 aa)). Residue Ser1064 is modified to Phosphoserine.

This sequence belongs to the protein kinase superfamily. Tyr protein kinase family. Insulin receptor subfamily. In terms of assembly, interacts with CTNNB1. Post-translationally, MMP14 cleaves PTK7 between Pro-621 and Leu-622 generating an N-terminal soluble (70 kDa) fragment and a membrane C-terminal (50 kDa) fragment. Proteolysis by MMP14 regulates PTK7 function in non-canonical Wnt signaling pathway. Highly expressed in lung, liver, pancreas, kidney, placenta and melanocytes. Weakly expressed in thyroid gland, ovary, brain, heart and skeletal muscle. Also expressed in erythroleukemia cells. But not expressed in colon.

It is found in the membrane. It localises to the cell junction. Its function is as follows. Inactive tyrosine kinase involved in Wnt signaling pathway. Component of both the non-canonical (also known as the Wnt/planar cell polarity signaling) and the canonical Wnt signaling pathway. Functions in cell adhesion, cell migration, cell polarity, proliferation, actin cytoskeleton reorganization and apoptosis. Has a role in embryogenesis, epithelial tissue organization and angiogenesis. This is Inactive tyrosine-protein kinase 7 (PTK7) from Homo sapiens (Human).